Reading from the N-terminus, the 89-residue chain is Large ribosomal subunit protein uL23c (89 aa).

The protein belongs to the universal ribosomal protein uL23 family. Part of the 50S ribosomal subunit.

The protein localises to the plastid. The protein resides in the chloroplast. Binds to 23S rRNA. This is Large ribosomal subunit protein uL23c (rpl23) from Zygnema circumcarinatum (Green alga).